Consider the following 591-residue polypeptide: Aspartate--tRNA(Asp/Asn) ligase (591 aa).

L-aspartate is bound at residue Glu-174. The aspartate stretch occupies residues 198–201; that stretch reads QLFK. L-aspartate is bound at residue Arg-220. ATP-binding positions include 220-222 and Gln-229; that span reads RDE. His-450 provides a ligand contact to L-aspartate. Glu-483 contacts ATP. An L-aspartate-binding site is contributed by Arg-490. ATP is bound at residue 535 to 538; it reads GLDR.

This sequence belongs to the class-II aminoacyl-tRNA synthetase family. Type 1 subfamily. As to quaternary structure, homodimer.

The protein resides in the cytoplasm. It catalyses the reaction tRNA(Asx) + L-aspartate + ATP = L-aspartyl-tRNA(Asx) + AMP + diphosphate. Its function is as follows. Aspartyl-tRNA synthetase with relaxed tRNA specificity since it is able to aspartylate not only its cognate tRNA(Asp) but also tRNA(Asn). Reaction proceeds in two steps: L-aspartate is first activated by ATP to form Asp-AMP and then transferred to the acceptor end of tRNA(Asp/Asn). This is Aspartate--tRNA(Asp/Asn) ligase from Pseudomonas fluorescens (strain Pf0-1).